The sequence spans 307 residues: Urease accessory protein UreD (307 aa).

Belongs to the UreD family. UreD, UreF and UreG form a complex that acts as a GTP-hydrolysis-dependent molecular chaperone, activating the urease apoprotein by helping to assemble the nickel containing metallocenter of UreC. The UreE protein probably delivers the nickel.

It localises to the cytoplasm. Required for maturation of urease via the functional incorporation of the urease nickel metallocenter. The sequence is that of Urease accessory protein UreD from Prochlorococcus marinus (strain NATL1A).